Reading from the N-terminus, the 275-residue chain is 2-dehydro-3-deoxyphosphooctonate aldolase (275 aa).

The protein belongs to the KdsA family.

The protein localises to the cytoplasm. The catalysed reaction is D-arabinose 5-phosphate + phosphoenolpyruvate + H2O = 3-deoxy-alpha-D-manno-2-octulosonate-8-phosphate + phosphate. Its pathway is carbohydrate biosynthesis; 3-deoxy-D-manno-octulosonate biosynthesis; 3-deoxy-D-manno-octulosonate from D-ribulose 5-phosphate: step 2/3. The protein operates within bacterial outer membrane biogenesis; lipopolysaccharide biosynthesis. The sequence is that of 2-dehydro-3-deoxyphosphooctonate aldolase from Protochlamydia amoebophila (strain UWE25).